The sequence spans 184 residues: Probable RNA 2'-phosphotransferase (184 aa).

It belongs to the KptA/TPT1 family.

Its function is as follows. Removes the 2'-phosphate from RNA via an intermediate in which the phosphate is ADP-ribosylated by NAD followed by a presumed transesterification to release the RNA and generate ADP-ribose 1''-2''-cyclic phosphate (APPR&gt;P). May function as an ADP-ribosylase. This is Probable RNA 2'-phosphotransferase from Rhizobium leguminosarum bv. trifolii (strain WSM2304).